A 59-amino-acid chain; its full sequence is DNA-directed RNA polymerase subunit Rpo6 (59 aa).

The protein belongs to the archaeal Rpo6/eukaryotic RPB6 RNA polymerase subunit family. As to quaternary structure, part of the RNA polymerase complex.

The protein localises to the cytoplasm. The catalysed reaction is RNA(n) + a ribonucleoside 5'-triphosphate = RNA(n+1) + diphosphate. DNA-dependent RNA polymerase (RNAP) catalyzes the transcription of DNA into RNA using the four ribonucleoside triphosphates as substrates. This is DNA-directed RNA polymerase subunit Rpo6 from Halorubrum lacusprofundi (strain ATCC 49239 / DSM 5036 / JCM 8891 / ACAM 34).